Consider the following 557-residue polypeptide: MDFKKTILWAVFSLSGLMLYNNWQVHEGKPSMFGGAPATTASAPNKSGAPAKLDTPVAISGIPSVTQTPTANSAPVESTQKFVLENELLSVEISAAGANVVDAKLLKELTADQKPVEIFQHTPTHTYVARSGLVAVGNTDLPNHTSLFKLDRSGKDGSGRPFLVLSSERNGVKLEKTFLLNPGSYDIYVGHRVTQVTPNGAPLILYTEIVRDGSEEKKIGPFGGAFSASTFTGPAIYTDGGKYKKVSFADIEKNKFTAPSQIAAGQPGWVAMVQHYFASAWIPDDKLPRDIYSGKIDNDLYRVGMQTQLGTIATGTTVMANAQLFVGPQEERMLETIAPGLELLKDYGYLTILAKPIFWLLEHIHNIVGNWGWSIILLTVLIKLAFFPLSAASYKSMARMKEVQPRLAAMKEQYKGEPQKLNQAMMEMYRKEKINPLGGCLPVVIQIPVFISLYWVLLSSVEMRGAPWILWIHDLSVPDPYYILPVVMAVSMFVQTKLNPTPPDPVQAKVMMYMPIVFSIMFFFFPAGLVLYWVTNNLLSIAQQWQINRLFGKKPAK.

Transmembrane regions (helical) follow at residues 6–26, 219–239, 367–387, 437–457, and 514–534; these read TILWAVFSLSGLMLYNNWQVH, IGPFGGAFSASTFTGPAIYTD, IVGNWGWSIILLTVLIKLAFF, LGGCLPVVIQIPVFISLYWVL, and MPIVFSIMFFFFPAGLVLYWV.

Belongs to the OXA1/ALB3/YidC family. Type 1 subfamily. As to quaternary structure, interacts with the Sec translocase complex via SecD. Specifically interacts with transmembrane segments of nascent integral membrane proteins during membrane integration.

It localises to the cell inner membrane. Functionally, required for the insertion and/or proper folding and/or complex formation of integral membrane proteins into the membrane. Involved in integration of membrane proteins that insert both dependently and independently of the Sec translocase complex, as well as at least some lipoproteins. Aids folding of multispanning membrane proteins. This Polynucleobacter asymbioticus (strain DSM 18221 / CIP 109841 / QLW-P1DMWA-1) (Polynucleobacter necessarius subsp. asymbioticus) protein is Membrane protein insertase YidC.